A 241-amino-acid chain; its full sequence is Uridylate kinase (241 aa).

15 to 18 is an ATP binding site; it reads KMSG. The involved in allosteric activation by GTP stretch occupies residues 23–28; it reads GAEGFG. Glycine 57 provides a ligand contact to UMP. Positions 58 and 62 each coordinate ATP. UMP-binding positions include aspartate 77 and 138-145; that span reads TGNPLFTT. Positions 165, 171, and 174 each coordinate ATP.

This sequence belongs to the UMP kinase family. Homohexamer.

It is found in the cytoplasm. The catalysed reaction is UMP + ATP = UDP + ADP. The protein operates within pyrimidine metabolism; CTP biosynthesis via de novo pathway; UDP from UMP (UMPK route): step 1/1. Allosterically activated by GTP. Inhibited by UTP. Functionally, catalyzes the reversible phosphorylation of UMP to UDP. The sequence is that of Uridylate kinase from Blochmanniella pennsylvanica (strain BPEN).